Here is a 160-residue protein sequence, read N- to C-terminus: RxLR effector protein PexRD44 (160 aa).

The N-terminal stretch at 1-21 (MRLLLWVLISMLSIALSSCAA) is a signal peptide. Residues 54-76 (RFLRGESSKIVNLKQEEGVFEER) carry the RxLR-dEER motif.

It belongs to the RxLR effector family.

The protein localises to the secreted. It is found in the host cell membrane. The protein resides in the host nucleus. Its subcellular location is the host nucleolus. Its function is as follows. Effector that is involved in host plant infection. Contributes to virulence during the early infection stage, by inhibiting plant defense responses induced by both PAMP-triggered immunity (PTI) and effector-triggered immunity (ETI). The protein is RxLR effector protein PexRD44 of Phytophthora infestans (strain T30-4) (Potato late blight agent).